A 464-amino-acid chain; its full sequence is Dihydrolipoyl dehydrogenase (464 aa).

FAD contacts are provided by residues 36 to 44 (EGAALGGTC), K53, and A119. Cysteines 44 and 49 form a disulfide. Residues 184-188 (GGGYI), E207, and 269-272 (AVGR) each bind NAD(+). D311 and A319 together coordinate FAD. The active-site Proton acceptor is the H443.

This sequence belongs to the class-I pyridine nucleotide-disulfide oxidoreductase family. In terms of assembly, homodimer. Requires FAD as cofactor.

The protein resides in the cytoplasm. It catalyses the reaction N(6)-[(R)-dihydrolipoyl]-L-lysyl-[protein] + NAD(+) = N(6)-[(R)-lipoyl]-L-lysyl-[protein] + NADH + H(+). The branched-chain alpha-keto dehydrogenase complex catalyzes the overall conversion of alpha-keto acids to acyl-CoA and CO(2). It contains multiple copies of 3 enzymatic components: branched-chain alpha-keto acid decarboxylase (E1), lipoamide acyltransferase (E2) and lipoamide dehydrogenase (E3). The chain is Dihydrolipoyl dehydrogenase from Pseudomonas aeruginosa (strain ATCC 15692 / DSM 22644 / CIP 104116 / JCM 14847 / LMG 12228 / 1C / PRS 101 / PAO1).